The following is a 604-amino-acid chain: Asparagine synthetase [glutamine-hydrolyzing] 1 (604 aa).

Cys2 serves as the catalytic Nucleophile. In terms of domain architecture, Glutamine amidotransferase type-2 spans 2-186 (CGILAVLGAA…PGHLYSSAAG (185 aa)). Residues 50–54 (RLAIV), 75–77 (NGE), and Asp99 each bind L-glutamine. The region spanning 211-451 (LREAFEKAVI…LPKHILYRQK (241 aa)) is the Asparagine synthetase domain. ATP-binding positions include Leu232, Val268, and 342–343 (SG).

It catalyses the reaction L-aspartate + L-glutamine + ATP + H2O = L-asparagine + L-glutamate + AMP + diphosphate + H(+). It functions in the pathway amino-acid biosynthesis; L-asparagine biosynthesis. Its function is as follows. Essential for nitrogen assimilation, distribution and remobilization within the plant via the phloem. This Oryza sativa subsp. japonica (Rice) protein is Asparagine synthetase [glutamine-hydrolyzing] 1.